Here is a 671-residue protein sequence, read N- to C-terminus: DNA ligase (671 aa).

NAD(+) contacts are provided by residues 32–36 (DAEYD), 81–82 (SL), and Glu113. Lys115 serves as the catalytic N6-AMP-lysine intermediate. 4 residues coordinate NAD(+): Arg136, Glu173, Lys290, and Lys314. The Zn(2+) site is built by Cys408, Cys411, Cys426, and Cys432. One can recognise a BRCT domain in the interval 593 to 671 (EIDSPFAGKT…EAEMIRLLGA (79 aa)).

Belongs to the NAD-dependent DNA ligase family. LigA subfamily. The cofactor is Mg(2+). It depends on Mn(2+) as a cofactor.

The catalysed reaction is NAD(+) + (deoxyribonucleotide)n-3'-hydroxyl + 5'-phospho-(deoxyribonucleotide)m = (deoxyribonucleotide)n+m + AMP + beta-nicotinamide D-nucleotide.. DNA ligase that catalyzes the formation of phosphodiester linkages between 5'-phosphoryl and 3'-hydroxyl groups in double-stranded DNA using NAD as a coenzyme and as the energy source for the reaction. It is essential for DNA replication and repair of damaged DNA. In Salmonella newport (strain SL254), this protein is DNA ligase.